A 293-amino-acid chain; its full sequence is Movement protein BC1 (293 aa).

Belongs to the begomovirus movement protein BC1 family. Binds to dimeric supercoiled plasmid DNA. Post-translationally, phosphorylated.

Its subcellular location is the host cell membrane. The protein resides in the host microsome membrane. It is found in the host endoplasmic reticulum membrane. In terms of biological role, transports viral genome to neighboring plant cells directly through plasmosdesmata, without any budding. The movement protein allows efficient cell to cell propagation, by bypassing the host cell wall barrier. Begomovirus genome is shuttled out of nucleus by Nuclear shuttle protein (NSP) and the movement protein transports the DNA-NSP complex to cell plasmodesmata and facilitates further movement across the cell wall. The sequence is that of Movement protein BC1 from Macroptilium lathyroides (Lima bean).